The sequence spans 335 residues: Holliday junction branch migration complex subunit RuvB (335 aa).

A large ATPase domain (RuvB-L) region spans residues 1 to 181; sequence MSERVISPEP…FGLLIRLNLY (181 aa). ATP is bound by residues leucine 20, arginine 21, glycine 62, lysine 65, threonine 66, threonine 67, 128-130, arginine 171, tyrosine 181, and arginine 218; that span reads EDF. Threonine 66 lines the Mg(2+) pocket. The segment at 182–252 is small ATPAse domain (RuvB-S); sequence SPEDLEKIVT…IAGAGLALLQ (71 aa). Residues 255 to 335 are head domain (RuvB-H); sequence ELGLDDIDRR…KLNHSQKTLF (81 aa). The DNA site is built by arginine 310 and arginine 315.

It belongs to the RuvB family. Homohexamer. Forms an RuvA(8)-RuvB(12)-Holliday junction (HJ) complex. HJ DNA is sandwiched between 2 RuvA tetramers; dsDNA enters through RuvA and exits via RuvB. An RuvB hexamer assembles on each DNA strand where it exits the tetramer. Each RuvB hexamer is contacted by two RuvA subunits (via domain III) on 2 adjacent RuvB subunits; this complex drives branch migration. In the full resolvosome a probable DNA-RuvA(4)-RuvB(12)-RuvC(2) complex forms which resolves the HJ.

It localises to the cytoplasm. It carries out the reaction ATP + H2O = ADP + phosphate + H(+). Its function is as follows. The RuvA-RuvB-RuvC complex processes Holliday junction (HJ) DNA during genetic recombination and DNA repair, while the RuvA-RuvB complex plays an important role in the rescue of blocked DNA replication forks via replication fork reversal (RFR). RuvA specifically binds to HJ cruciform DNA, conferring on it an open structure. The RuvB hexamer acts as an ATP-dependent pump, pulling dsDNA into and through the RuvAB complex. RuvB forms 2 homohexamers on either side of HJ DNA bound by 1 or 2 RuvA tetramers; 4 subunits per hexamer contact DNA at a time. Coordinated motions by a converter formed by DNA-disengaged RuvB subunits stimulates ATP hydrolysis and nucleotide exchange. Immobilization of the converter enables RuvB to convert the ATP-contained energy into a lever motion, pulling 2 nucleotides of DNA out of the RuvA tetramer per ATP hydrolyzed, thus driving DNA branch migration. The RuvB motors rotate together with the DNA substrate, which together with the progressing nucleotide cycle form the mechanistic basis for DNA recombination by continuous HJ branch migration. Branch migration allows RuvC to scan DNA until it finds its consensus sequence, where it cleaves and resolves cruciform DNA. This is Holliday junction branch migration complex subunit RuvB from Methanoregula boonei (strain DSM 21154 / JCM 14090 / 6A8).